A 254-amino-acid polypeptide reads, in one-letter code: 5'-nucleotidase SurE (254 aa).

The a divalent metal cation site is built by Asp8, Asp9, Ser39, and Asn91.

Belongs to the SurE nucleotidase family. A divalent metal cation serves as cofactor.

It localises to the cytoplasm. The catalysed reaction is a ribonucleoside 5'-phosphate + H2O = a ribonucleoside + phosphate. In terms of biological role, nucleotidase that shows phosphatase activity on nucleoside 5'-monophosphates. In Pseudoalteromonas translucida (strain TAC 125), this protein is 5'-nucleotidase SurE.